Reading from the N-terminus, the 598-residue chain is Eukaryotic translation initiation factor 3 subunit D (598 aa).

Residues 104–178 (VKTRGFGRGG…YDKPQRNRDS (75 aa)) form a disordered region. The segment covering 109 to 132 (FGRGGGTIFRGRGQRGGAQRGRGG) has biased composition (gly residues). Over residues 165 to 177 (GWKDYDKPQRNRD) the composition is skewed to basic and acidic residues. Residues 304–318 (SIDLVTVNENAADAP) are RNA gate. A disordered region spans residues 574 to 598 (NTFEEEDDTGAKAEKDEESEEKDEE). A compositionally biased stretch (acidic residues) spans 589–598 (DEESEEKDEE).

Belongs to the eIF-3 subunit D family. In terms of assembly, component of the eukaryotic translation initiation factor 3 (eIF-3) complex.

It localises to the cytoplasm. MRNA cap-binding component of the eukaryotic translation initiation factor 3 (eIF-3) complex, which is involved in protein synthesis of a specialized repertoire of mRNAs and, together with other initiation factors, stimulates binding of mRNA and methionyl-tRNAi to the 40S ribosome. The eIF-3 complex specifically targets and initiates translation of a subset of mRNAs involved in cell proliferation. In the eIF-3 complex, eif3d specifically recognizes and binds the 7-methylguanosine cap of a subset of mRNAs. In Coccidioides immitis (strain RS) (Valley fever fungus), this protein is Eukaryotic translation initiation factor 3 subunit D.